The primary structure comprises 582 residues: uncharacterized protein (582 aa).

The N-terminal stretch at 1–27 (MNYAVLPPELNSLRMFTGAGSAPMLAA) is a signal peptide. The span at 241–257 (GNGRAGLPGSGNVGNGN) shows a compositional bias: gly residues. Residues 241–278 (GNGRAGLPGSGNVGNGNLGNSNLGSGNTGNSNVGFGNT) are disordered. A compositionally biased stretch (low complexity) spans 258–278 (LGNSNLGSGNTGNSNVGFGNT).

It belongs to the mycobacterial PPE family.

This is an uncharacterized protein from Mycobacterium tuberculosis (strain ATCC 25618 / H37Rv).